The chain runs to 330 residues: Olfactory receptor 5P73 (330 aa).

At 1–28 (MAFLEDGNHTTVTEFFLLGLTDDPVLRD) the chain is on the extracellular side. N8 carries N-linked (GlcNAc...) asparagine glycosylation. Residues 29-49 (ILFIIILCIYLVTVSGNLSTI) traverse the membrane as a helical segment. Topologically, residues 50–57 (LLIRVSSQ) are cytoplasmic. Residues 58-78 (LHHPMYFILSHLASVDIGISS) form a helical membrane-spanning segment. The Extracellular segment spans residues 79–102 (SVTPNMLATFLVKQNTISYIGCSI). A disulfide bond links C100 and C192. The helical transmembrane segment at 103 to 123 (QFTSAAFFGTVECFLLATMAY) threads the bilayer. Residues 124–136 (DRFVAICNPLLYS) are Cytoplasmic-facing. A helical membrane pass occupies residues 137 to 157 (TKMSTEACIQLVVGSYIQGFL). The Extracellular segment spans residues 158–199 (NASFFTLSFFSLFFCGPNRINDFYCDFAPLLELSCSDVTVAV). Residues 200-220 (VITSISAGFITLTTVFVIAIS) form a helical membrane-spanning segment. Residues 221-240 (YSCIFITIMKMHSTESRCKA) are Cytoplasmic-facing. A helical transmembrane segment spans residues 241-261 (FSTCTSHLTAVILFYGTAIFI). The Extracellular segment spans residues 262–274 (YVMPKSSYSTDQN). A helical membrane pass occupies residues 275–295 (KVLSIFYTVVIPMLNPLIYSL). The Cytoplasmic segment spans residues 296–330 (RNNEIKEALKRHLGKKVFSYGNLFCKTHYNHNYPV).

It belongs to the G-protein coupled receptor 1 family.

The protein resides in the cell membrane. Potential odorant receptor. This is Olfactory receptor 5P73 from Mus musculus (Mouse).